Reading from the N-terminus, the 282-residue chain is Pantothenate synthetase (282 aa).

M30–H37 is an ATP binding site. H37 (proton donor) is an active-site residue. Q60 is a (R)-pantoate binding site. Q60 is a binding site for beta-alanine. G146 to D149 contributes to the ATP binding site. Q152 serves as a coordination point for (R)-pantoate. ATP-binding positions include I175 and K183 to R186.

This sequence belongs to the pantothenate synthetase family. In terms of assembly, homodimer.

The protein resides in the cytoplasm. The catalysed reaction is (R)-pantoate + beta-alanine + ATP = (R)-pantothenate + AMP + diphosphate + H(+). It functions in the pathway cofactor biosynthesis; (R)-pantothenate biosynthesis; (R)-pantothenate from (R)-pantoate and beta-alanine: step 1/1. In terms of biological role, catalyzes the condensation of pantoate with beta-alanine in an ATP-dependent reaction via a pantoyl-adenylate intermediate. In Campylobacter jejuni subsp. jejuni serotype O:6 (strain 81116 / NCTC 11828), this protein is Pantothenate synthetase.